Here is a 109-residue protein sequence, read N- to C-terminus: Large ribosomal subunit protein uL24 (109 aa).

Belongs to the universal ribosomal protein uL24 family. As to quaternary structure, part of the 50S ribosomal subunit.

In terms of biological role, one of two assembly initiator proteins, it binds directly to the 5'-end of the 23S rRNA, where it nucleates assembly of the 50S subunit. Functionally, one of the proteins that surrounds the polypeptide exit tunnel on the outside of the subunit. In Rickettsia africae (strain ESF-5), this protein is Large ribosomal subunit protein uL24.